The following is a 316-amino-acid chain: Acetyl-coenzyme A carboxylase carboxyl transferase subunit beta, chloroplastic (316 aa).

The 270-residue stretch at 47–316 (LWTRCDNCEN…CKKFQNSFFK (270 aa)) folds into the CoA carboxyltransferase N-terminal domain. Cys51, Cys54, Cys70, and Cys73 together coordinate Zn(2+). The C4-type zinc-finger motif lies at 51–73 (CDNCENMLYVRFLRQNKRICEEC).

The protein belongs to the AccD/PCCB family. In terms of assembly, acetyl-CoA carboxylase is a heterohexamer composed of biotin carboxyl carrier protein, biotin carboxylase and 2 subunits each of ACCase subunit alpha and ACCase plastid-coded subunit beta (accD). The cofactor is Zn(2+).

Its subcellular location is the plastid. It localises to the chloroplast stroma. The enzyme catalyses N(6)-carboxybiotinyl-L-lysyl-[protein] + acetyl-CoA = N(6)-biotinyl-L-lysyl-[protein] + malonyl-CoA. Its pathway is lipid metabolism; malonyl-CoA biosynthesis; malonyl-CoA from acetyl-CoA: step 1/1. In terms of biological role, component of the acetyl coenzyme A carboxylase (ACC) complex. Biotin carboxylase (BC) catalyzes the carboxylation of biotin on its carrier protein (BCCP) and then the CO(2) group is transferred by the transcarboxylase to acetyl-CoA to form malonyl-CoA. This Marchantia polymorpha (Common liverwort) protein is Acetyl-coenzyme A carboxylase carboxyl transferase subunit beta, chloroplastic.